The chain runs to 127 residues: Protein ApaG (127 aa).

Positions 3–127 (DADVYAISVE…FVLAIPRTLH (125 aa)) constitute an ApaG domain.

The chain is Protein ApaG from Stenotrophomonas maltophilia (strain K279a).